Consider the following 264-residue polypeptide: Phosphatidylglycerol--prolipoprotein diacylglyceryl transferase (264 aa).

A run of 4 helical transmembrane segments spans residues leucine 17–glycine 37, leucine 57–tyrosine 77, isoleucine 89–valine 109, and glycine 118–alanine 138. Arginine 140 serves as a coordination point for a 1,2-diacyl-sn-glycero-3-phospho-(1'-sn-glycerol). Helical transmembrane passes span proline 173 to phenylalanine 193, glycine 201 to threonine 221, and methionine 237 to alanine 257.

The protein belongs to the Lgt family.

It is found in the cell inner membrane. It catalyses the reaction L-cysteinyl-[prolipoprotein] + a 1,2-diacyl-sn-glycero-3-phospho-(1'-sn-glycerol) = an S-1,2-diacyl-sn-glyceryl-L-cysteinyl-[prolipoprotein] + sn-glycerol 1-phosphate + H(+). Its pathway is protein modification; lipoprotein biosynthesis (diacylglyceryl transfer). In terms of biological role, catalyzes the transfer of the diacylglyceryl group from phosphatidylglycerol to the sulfhydryl group of the N-terminal cysteine of a prolipoprotein, the first step in the formation of mature lipoproteins. This Bordetella avium (strain 197N) protein is Phosphatidylglycerol--prolipoprotein diacylglyceryl transferase.